The primary structure comprises 257 residues: Transmembrane protein C257L (257 aa).

A run of 2 helical transmembrane segments spans residues 123–143 (LELL…FTAL) and 163–183 (MMIF…YVLV).

It belongs to the asfivirus C257R family.

The protein resides in the host membrane. It localises to the virion. The protein is Transmembrane protein C257L of African swine fever virus (isolate Warthog/Namibia/Wart80/1980) (ASFV).